A 281-amino-acid chain; its full sequence is Acyl-[acyl-carrier-protein]--UDP-N-acetylglucosamine O-acyltransferase (281 aa).

Belongs to the transferase hexapeptide repeat family. LpxA subfamily. As to quaternary structure, homotrimer.

It is found in the cytoplasm. It catalyses the reaction a (3R)-hydroxyacyl-[ACP] + UDP-N-acetyl-alpha-D-glucosamine = a UDP-3-O-[(3R)-3-hydroxyacyl]-N-acetyl-alpha-D-glucosamine + holo-[ACP]. The protein operates within glycolipid biosynthesis; lipid IV(A) biosynthesis; lipid IV(A) from (3R)-3-hydroxytetradecanoyl-[acyl-carrier-protein] and UDP-N-acetyl-alpha-D-glucosamine: step 1/6. Involved in the biosynthesis of lipid A, a phosphorylated glycolipid that anchors the lipopolysaccharide to the outer membrane of the cell. This is Acyl-[acyl-carrier-protein]--UDP-N-acetylglucosamine O-acyltransferase from Rickettsia bellii (strain OSU 85-389).